A 1119-amino-acid chain; its full sequence is Transcriptional repressor NF-X1 homolog (1119 aa).

Residues 1 to 214 (MADTEGTSSS…EPLTEEETKI (214 aa)) form a disordered region. Residues 7–17 (TSSSIPTSTNS) are compositionally biased toward low complexity. Residues 18 to 29 (SRHRASRGRGGR) show a composition bias toward basic residues. A compositionally biased stretch (low complexity) spans 84–98 (ANFTFNPNAATFNPA). Residues 113–128 (GASTHSNQNSRQQEPS) are compositionally biased toward polar residues. Positions 143–154 (RQLEIQEQRGDS) are enriched in basic and acidic residues. The segment covering 157-167 (QNQSRQNNRNQ) has biased composition (low complexity). Over residues 174 to 193 (ANQQNKSVQNPSRNPGNSRR) the composition is skewed to polar residues. Over residues 198–214 (RRREQKEEPLTEEETKI) the composition is skewed to basic and acidic residues. Residues 235 to 287 (CAICYTRITTRQGVWSCKTCYHIFHISTGCITDWARSSRDKEGANTWRCPTCQ) form an RING-type; degenerate zinc finger. 9 NF-X1-type zinc fingers span residues 330–348 (CPHP…ECKL), 383–402 (CGQH…ECTV), 439–458 (CGIH…ECET), 500–523 (CGTP…PCNL), 565–584 (CGMH…FCLQ), 592–611 (CGIH…PCLQ), 649–668 (CDHS…PCTQ), 703–726 (CGVH…KCTK), and 735–756 (CEHP…PCKA). The 71-residue stretch at 867–937 (IDFVKSVEKI…KRSIVLTAVR (71 aa)) folds into the R3H domain. Disordered regions lie at residues 1024 to 1047 (VDSD…PKDW) and 1078 to 1119 (AAKK…ELLE). A compositionally biased stretch (polar residues) spans 1032–1041 (NVPTTSNLVS). Over residues 1086–1097 (PTWEDQCDEDAP) the composition is skewed to acidic residues.

Belongs to the NFX1 family.

It localises to the nucleus. Functionally, may play a role in transcription regulation. This chain is Transcriptional repressor NF-X1 homolog (nfx-1), found in Caenorhabditis elegans.